A 90-amino-acid polypeptide reads, in one-letter code: MARNVQCIKLGCEAEGLDFPPYPGELGKRIFENVSREAWGQWIKHQTMLVNEMRLSMADIKARKYLATQMEAYFFGEGAEQPVGYVPPEK.

The protein belongs to the Fe(2+)-trafficking protein family.

In terms of biological role, could be a mediator in iron transactions between iron acquisition and iron-requiring processes, such as synthesis and/or repair of Fe-S clusters in biosynthetic enzymes. This Nitrosomonas eutropha (strain DSM 101675 / C91 / Nm57) protein is Probable Fe(2+)-trafficking protein.